The sequence spans 301 residues: Protease HtpX (301 aa).

2 helical membrane passes run 4 to 24 (IGLFLLTNLAVLVVAGIILSL) and 38 to 58 (LGNLLVICFVFGMVGSLVSLF). Histidine 147 serves as a coordination point for Zn(2+). Glutamate 148 is an active-site residue. Histidine 151 contacts Zn(2+). 2 consecutive transmembrane segments (helical) span residues 155-175 (GDMVTLALIQGVVNAFVMFFA) and 200-220 (FIITMVLDIVFGILASAIVMW). Residue glutamate 226 coordinates Zn(2+).

The protein belongs to the peptidase M48B family. It depends on Zn(2+) as a cofactor.

It localises to the cell inner membrane. The polypeptide is Protease HtpX (Acinetobacter baumannii (strain AB307-0294)).